Consider the following 316-residue polypeptide: HPr kinase/phosphorylase (316 aa).

Active-site residues include histidine 143 and lysine 164. 158–165 (GEAGSGKS) provides a ligand contact to ATP. Serine 165 contacts Mg(2+). Aspartate 182 functions as the Proton acceptor; for phosphorylation activity. Proton donor; for dephosphorylation activity in the catalytic mechanism. The interval 206-215 (LEVRGLGVLN) is important for the catalytic mechanism of both phosphorylation and dephosphorylation. Mg(2+) is bound at residue glutamate 207. Residue arginine 251 is part of the active site. An important for the catalytic mechanism of dephosphorylation region spans residues 272-277 (PVMPGR).

The protein belongs to the HPrK/P family. In terms of assembly, homohexamer. It depends on Mg(2+) as a cofactor.

The catalysed reaction is [HPr protein]-L-serine + ATP = [HPr protein]-O-phospho-L-serine + ADP + H(+). The enzyme catalyses [HPr protein]-O-phospho-L-serine + phosphate + H(+) = [HPr protein]-L-serine + diphosphate. Its function is as follows. Catalyzes the ATP- as well as the pyrophosphate-dependent phosphorylation of a specific serine residue in HPr, a phosphocarrier protein of the phosphoenolpyruvate-dependent sugar phosphotransferase system (PTS). HprK/P also catalyzes the pyrophosphate-producing, inorganic phosphate-dependent dephosphorylation (phosphorolysis) of seryl-phosphorylated HPr (P-Ser-HPr). The chain is HPr kinase/phosphorylase from Xanthomonas euvesicatoria pv. vesicatoria (strain 85-10) (Xanthomonas campestris pv. vesicatoria).